The primary structure comprises 433 residues: MLRLKCASQRYDWGKVGVNSIVYKLQVASENPDISHVDLPYAELWMGTHPSGSSCLWDNPHVTLAAHIQENPASLGKPSLIYFGRRLPFLFKVLSVAKALSIQAHPDKKMAVRLHAEQPDLYKDGSHKPEMAIALTDFEALLGFRPLNQILAFIQAFPELAELTTLELPSPEEKRDVQPPSIKQLYSNLMRSSPEKVESTIKSLLNRFTTGSKSVCDPPLSILGVDLQEEDVQALVDLFLRLTQAFPGDVGCLSIFFLNYIRLKSGEAIFLKANTPHAYLSGDCVECMANSDNVVRAGLTPKFKDVERLLEMLDYTPLTDSLRLGATQPIPTPEGISMKSFIPPVSEFAVDVIQFDAESRGFSLPSVPTASILLFLHGQGTITCPSTGEACSQETKFGPGFVYFVPADMIVNLVSKEDRKGSLHAFRAYVNRK.

Positions 103, 105, 130, and 277 each coordinate Zn(2+). R296 is a catalytic residue.

Belongs to the mannose-6-phosphate isomerase type 1 family. It depends on Zn(2+) as a cofactor.

Its subcellular location is the cytoplasm. It carries out the reaction D-mannose 6-phosphate = D-fructose 6-phosphate. It participates in nucleotide-sugar biosynthesis; GDP-alpha-D-mannose biosynthesis; alpha-D-mannose 1-phosphate from D-fructose 6-phosphate: step 1/2. In terms of biological role, involved in the synthesis of the GDP-mannose and dolichol-phosphate-mannose required for a number of critical mannosyl transfer reactions. This Echinococcus multilocularis (Fox tapeworm) protein is Probable mannose-6-phosphate isomerase (PMIH).